The sequence spans 268 residues: 4-hydroxy-tetrahydrodipicolinate reductase (268 aa).

Residues 9–14 (GAAGRM), 99–101 (GTT), and 123–126 (ASNF) each bind NAD(+). His-156 acts as the Proton donor/acceptor in catalysis. Residue His-157 coordinates (S)-2,3,4,5-tetrahydrodipicolinate. Lys-160 functions as the Proton donor in the catalytic mechanism. 166–167 (GT) is a (S)-2,3,4,5-tetrahydrodipicolinate binding site.

Belongs to the DapB family.

It is found in the cytoplasm. It carries out the reaction (S)-2,3,4,5-tetrahydrodipicolinate + NAD(+) + H2O = (2S,4S)-4-hydroxy-2,3,4,5-tetrahydrodipicolinate + NADH + H(+). The enzyme catalyses (S)-2,3,4,5-tetrahydrodipicolinate + NADP(+) + H2O = (2S,4S)-4-hydroxy-2,3,4,5-tetrahydrodipicolinate + NADPH + H(+). Its pathway is amino-acid biosynthesis; L-lysine biosynthesis via DAP pathway; (S)-tetrahydrodipicolinate from L-aspartate: step 4/4. Catalyzes the conversion of 4-hydroxy-tetrahydrodipicolinate (HTPA) to tetrahydrodipicolinate. The polypeptide is 4-hydroxy-tetrahydrodipicolinate reductase (Saccharophagus degradans (strain 2-40 / ATCC 43961 / DSM 17024)).